Consider the following 361-residue polypeptide: Peptide chain release factor 1 (361 aa).

An N5-methylglutamine modification is found at Gln-236. Residues 286–306 (AADSQRAEARKGQVGSGDRSE) are disordered.

The protein belongs to the prokaryotic/mitochondrial release factor family. Methylated by PrmC. Methylation increases the termination efficiency of RF1.

It is found in the cytoplasm. Peptide chain release factor 1 directs the termination of translation in response to the peptide chain termination codons UAG and UAA. The chain is Peptide chain release factor 1 from Magnetococcus marinus (strain ATCC BAA-1437 / JCM 17883 / MC-1).